The primary structure comprises 412 residues: Peptidase T (412 aa).

Residue H78 coordinates Zn(2+). D80 is a catalytic residue. Residue D140 coordinates Zn(2+). E174 acts as the Proton acceptor in catalysis. Residues E175, D197, and H379 each coordinate Zn(2+).

This sequence belongs to the peptidase M20B family. It depends on Zn(2+) as a cofactor.

It is found in the cytoplasm. The enzyme catalyses Release of the N-terminal residue from a tripeptide.. Its function is as follows. Cleaves the N-terminal amino acid of tripeptides. The chain is Peptidase T from Staphylococcus epidermidis (strain ATCC 12228 / FDA PCI 1200).